Here is a 514-residue protein sequence, read N- to C-terminus: Endogenous retrovirus group PABLB member 1 Env polyprotein (514 aa).

N-linked (GlcNAc...) asparagine glycosylation is present at N58. Positions S60–Q316 are surface protein. Residues C82–C85 carry the CXXC motif. N-linked (GlcNAc...) asparagine glycosylation is found at N133, N140, N155, N218, N226, and N267. The tract at residues G317–P514 is transmembrane protein. The tract at residues L328 to L348 is fusion peptide. N-linked (GlcNAc...) asparagine glycosylation is found at N350 and N357. The CKS-17 motif lies at L378–T394. C395 and C402 form a disulfide bridge. The CX6CC signature appears at C395–C403. N-linked (GlcNAc...) asparagine glycosylation is found at N408 and N412. Residues I452 to F472 traverse the membrane as a helical segment.

This sequence belongs to the gamma type-C retroviral envelope protein family. HERV class-I R(b) env subfamily. The CXXC motif is highly conserved across a broad range of retroviral envelope proteins. It is thought to participate in the formation of a labile disulfide bond possibly with the CX6CC motif present in the transmembrane domain. In terms of tissue distribution, low expression in placenta and testis.

It localises to the cell membrane. Its function is as follows. Retroviral envelope proteins mediate receptor recognition and membrane fusion during early infection. Endogenous envelope proteins may have kept, lost or modified their original function during evolution. This endogenous envelope protein has lost its original fusogenic properties. The sequence is that of Endogenous retrovirus group PABLB member 1 Env polyprotein (ERVPABLB-1) from Homo sapiens (Human).